A 198-amino-acid polypeptide reads, in one-letter code: Nucleoid occlusion factor SlmA (198 aa).

The HTH tetR-type domain maps to 10–70 (NRREEILQSL…SLIEFIEDSL (61 aa)). The segment at residues 33–52 (TTAKLAASVGVSEAALYRHF) is a DNA-binding region (H-T-H motif). The stretch at 117–144 (EQDRLQGRINQLFERIEAQLRQVLREKR) forms a coiled coil.

Belongs to the nucleoid occlusion factor SlmA family. In terms of assembly, homodimer. Interacts with FtsZ.

It is found in the cytoplasm. It localises to the nucleoid. Its function is as follows. Required for nucleoid occlusion (NO) phenomenon, which prevents Z-ring formation and cell division over the nucleoid. Acts as a DNA-associated cell division inhibitor that binds simultaneously chromosomal DNA and FtsZ, and disrupts the assembly of FtsZ polymers. SlmA-DNA-binding sequences (SBS) are dispersed on non-Ter regions of the chromosome, preventing FtsZ polymerization at these regions. The chain is Nucleoid occlusion factor SlmA from Escherichia coli (strain 55989 / EAEC).